Here is a 410-residue protein sequence, read N- to C-terminus: Cysteine desulfurase (410 aa).

Lys-227 carries the N6-(pyridoxal phosphate)lysine modification. The Cysteine persulfide intermediate role is filled by Cys-365.

The protein belongs to the class-V pyridoxal-phosphate-dependent aminotransferase family. Csd subfamily. In terms of assembly, homodimer. Interacts with SufE and the SufBCD complex composed of SufB, SufC and SufD. The interaction with SufE is required to mediate the direct transfer of the sulfur atom from the S-sulfanylcysteine. It depends on pyridoxal 5'-phosphate as a cofactor.

The protein resides in the cytoplasm. The catalysed reaction is (sulfur carrier)-H + L-cysteine = (sulfur carrier)-SH + L-alanine. The enzyme catalyses L-selenocysteine + AH2 = hydrogenselenide + L-alanine + A + H(+). The protein operates within cofactor biosynthesis; iron-sulfur cluster biosynthesis. Cysteine desulfurases mobilize the sulfur from L-cysteine to yield L-alanine, an essential step in sulfur metabolism for biosynthesis of a variety of sulfur-containing biomolecules. Component of the suf operon, which is activated and required under specific conditions such as oxidative stress and iron limitation. Acts as a potent selenocysteine lyase in vitro, that mobilizes selenium from L-selenocysteine. Selenocysteine lyase activity is however unsure in vivo. In Wigglesworthia glossinidia brevipalpis, this protein is Cysteine desulfurase.